A 231-amino-acid chain; its full sequence is PX domain-containing protein 1 (231 aa).

One can recognise a PX domain in the interval 1–134 (MASAVFEGTS…TFFERSPLDQ (134 aa)).

This chain is PX domain-containing protein 1 (PXDC1), found in Homo sapiens (Human).